Here is a 414-residue protein sequence, read N- to C-terminus: Argininosuccinate synthase (414 aa).

ATP is bound by residues 15 to 23 (AYSGGLDTS) and A42. L-citrulline contacts are provided by Y93 and S98. G123 serves as a coordination point for ATP. The L-aspartate site is built by T125, N129, and D130. Residue N129 participates in L-citrulline binding. Residues R133, S182, S191, E267, and Y279 each coordinate L-citrulline.

This sequence belongs to the argininosuccinate synthase family. Type 1 subfamily. Homotetramer.

The protein resides in the cytoplasm. It catalyses the reaction L-citrulline + L-aspartate + ATP = 2-(N(omega)-L-arginino)succinate + AMP + diphosphate + H(+). Its pathway is amino-acid biosynthesis; L-arginine biosynthesis; L-arginine from L-ornithine and carbamoyl phosphate: step 2/3. The polypeptide is Argininosuccinate synthase (Deinococcus geothermalis (strain DSM 11300 / CIP 105573 / AG-3a)).